A 357-amino-acid polypeptide reads, in one-letter code: Cinnamyl alcohol dehydrogenase 1 (357 aa).

In terms of domain architecture, Enoyl reductase (ER) spans 20–348 (GILSPYTYTL…KNDVRYRFVV (329 aa)). C47 lines the Zn(2+) pocket. Position 49 (S49) interacts with NADP(+). Zn(2+) is bound by residues H69, E70, C100, C103, C106, C114, and C163. NADP(+) is bound by residues T167, 188–193 (GLGGVG), 211–216 (SSSDKK), T251, G275, and 298–300 (SFI).

It belongs to the zinc-containing alcohol dehydrogenase family. As to quaternary structure, homodimer. It depends on Zn(2+) as a cofactor. In terms of tissue distribution, accumulates mainly in the placenta of red fruits, and, to a lower extent, in green fruits placenta, pericarp and seeds.

It is found in the cytoplasm. The enzyme catalyses (E)-cinnamyl alcohol + NADP(+) = (E)-cinnamaldehyde + NADPH + H(+). It catalyses the reaction (E)-coniferol + NADP(+) = (E)-coniferaldehyde + NADPH + H(+). It carries out the reaction (E)-sinapyl alcohol + NADP(+) = (E)-sinapaldehyde + NADPH + H(+). The catalysed reaction is (E)-4-coumaroyl alcohol + NADP(+) = (E)-4-coumaraldehyde + NADPH + H(+). The enzyme catalyses (E)-caffeyl alcohol + NADP(+) = (E)-caffeyl aldehyde + NADPH + H(+). It catalyses the reaction vanillin + NADPH + H(+) = 4-hydroxy-3-methoxy-benzenemethanol + NADP(+). The protein operates within aromatic compound metabolism; phenylpropanoid biosynthesis. With respect to regulation, inhibited, in a concentration-dependent manner, by N-(O-hydroxyphenyl) sulfinamoyltertiobutyl acetate (OHPAS), a specific cinnamyl alcohol dehydrogenase (CAD) inhibitor, as well as by ethylenediaminetetraacetic acid (EDTA), a metalloenzyme inhibitor. Involved in the biosynthesis of capsinoids natural products (e.g. capsiate), non-pungent alkaloids synthesized from phenylpropanoid intermediates in the placental tissue of sweet chili pepper fruit acting as repellant on herbivorous mammals. Catalyzes the reduction of vanillin to generate vanillyl alcohol, a precursor of capsiate, a non-pungent component that accumulates mainly in the placenta of mature red fruits, but also in green fruits to lower levels. Involved in lignin biosynthesis. Catalyzes the final step specific for the production of lignin monomers. Mediates the conversion of cinnamaldehyde and coniferaldehyde to cinnamyl alcohol and coniferyl alcohol, respectively. Catalyzes the NADPH-dependent reduction of 5-hydroxyconiferaldehyde, sinapaldehyde, 4-coumaraldehyde and caffeyl aldehyde to their respective alcohols. This Capsicum annuum (Capsicum pepper) protein is Cinnamyl alcohol dehydrogenase 1.